A 257-amino-acid polypeptide reads, in one-letter code: UPF0246 protein Lcho_2652 (257 aa).

This sequence belongs to the UPF0246 family.

The chain is UPF0246 protein Lcho_2652 from Leptothrix cholodnii (strain ATCC 51168 / LMG 8142 / SP-6) (Leptothrix discophora (strain SP-6)).